We begin with the raw amino-acid sequence, 324 residues long: Quinolinate synthase 1 (324 aa).

2 residues coordinate iminosuccinate: histidine 48 and serine 66. Cysteine 111 provides a ligand contact to [4Fe-4S] cluster. Iminosuccinate contacts are provided by residues tyrosine 137–asparagine 139 and serine 154. [4Fe-4S] cluster is bound at residue cysteine 196. Residues histidine 222–glutamate 224 and threonine 239 contribute to the iminosuccinate site. Cysteine 282 contacts [4Fe-4S] cluster.

Belongs to the quinolinate synthase family. Type 2 subfamily. Requires [4Fe-4S] cluster as cofactor.

It is found in the cytoplasm. It catalyses the reaction iminosuccinate + dihydroxyacetone phosphate = quinolinate + phosphate + 2 H2O + H(+). It functions in the pathway cofactor biosynthesis; NAD(+) biosynthesis; quinolinate from iminoaspartate: step 1/1. In terms of biological role, catalyzes the condensation of iminoaspartate with dihydroxyacetone phosphate to form quinolinate. This chain is Quinolinate synthase 1, found in Mesorhizobium japonicum (strain LMG 29417 / CECT 9101 / MAFF 303099) (Mesorhizobium loti (strain MAFF 303099)).